A 355-amino-acid chain; its full sequence is Uroporphyrinogen decarboxylase (355 aa).

Residues 27-31 (RQAGR), Asp-78, Tyr-155, Thr-210, and His-328 each bind substrate.

This sequence belongs to the uroporphyrinogen decarboxylase family. In terms of assembly, homodimer.

The protein localises to the cytoplasm. It catalyses the reaction uroporphyrinogen III + 4 H(+) = coproporphyrinogen III + 4 CO2. Its pathway is porphyrin-containing compound metabolism; protoporphyrin-IX biosynthesis; coproporphyrinogen-III from 5-aminolevulinate: step 4/4. Its function is as follows. Catalyzes the decarboxylation of four acetate groups of uroporphyrinogen-III to yield coproporphyrinogen-III. The protein is Uroporphyrinogen decarboxylase of Pseudomonas fluorescens (strain SBW25).